The chain runs to 202 residues: MKYPLILASSSLFRQSLLQKFNLPFDTFSPNVDESALNNETPAQLVKRLSELKARAASKHFSKGLVIGSDQVAVFNEQILGKPHNKHNAVKQLSLFSGHSVTFLTGLCVYDLTSGESKTCIEPFNVTFKTLTDAQISAYCDAEQPYNCAGSFKSEGLGICLFEKLTGDDPNSLIGLPLIKLSQLLAEFGLDVLSAQSNTPLS.

D70 functions as the Proton acceptor in the catalytic mechanism.

It belongs to the Maf family. YceF subfamily. It depends on a divalent metal cation as a cofactor.

Its subcellular location is the cytoplasm. The enzyme catalyses N(7)-methyl-GTP + H2O = N(7)-methyl-GMP + diphosphate + H(+). Nucleoside triphosphate pyrophosphatase that hydrolyzes 7-methyl-GTP (m(7)GTP). May have a dual role in cell division arrest and in preventing the incorporation of modified nucleotides into cellular nucleic acids. The protein is 7-methyl-GTP pyrophosphatase of Pseudoalteromonas translucida (strain TAC 125).